A 198-amino-acid polypeptide reads, in one-letter code: MQVQPKYFEKSQYIETLNGNKVSKSSILCGIMNIRLHGKTIIKPGVIVRGDLASVNIGRLSIISENTVIRPSSKKFKGSLVYFPQNIGDHVLVGEGCVISAASIGSNVYIGNNCIISKRCILKDCCIIADNTILPPDTVVPPFTYYSGTPGVYKEDLPDCIEQFQKEYTTSLYESFLPNTPASKGLPSTPTKLQTTTT.

The span at 179 to 188 (NTPASKGLPS) shows a compositional bias: polar residues. The disordered stretch occupies residues 179-198 (NTPASKGLPSTPTKLQTTTT). Residues 189–198 (TPTKLQTTTT) show a composition bias toward low complexity.

It belongs to the dynactin subunits 5/6 family. Dynactin subunit 5 subfamily. In terms of assembly, member of the pointed-end complex of the dynactin shoulder complex.

Its subcellular location is the cytoplasm. The protein localises to the cytoskeleton. The protein is Dynactin subunit 5 (dynE) of Dictyostelium discoideum (Social amoeba).